We begin with the raw amino-acid sequence, 355 residues long: Protein MxiC (355 aa).

Its subcellular location is the secreted. The protein resides in the host cell. Functionally, necessary for the secretion of IPA invasins. The protein is Protein MxiC (mxiC) of Shigella flexneri.